Consider the following 141-residue polypeptide: Nuclear transcription factor Y subunit B-1 (141 aa).

Residues Met1–Asp23 form a disordered region. N-acetylalanine is present on Ala2. Residues Leu26–Ser32 mediate DNA binding. A subunit association domain (SAD) region spans residues Val53 to Ile64. Residues Asp114–Trp141 form a disordered region.

This sequence belongs to the NFYB/HAP3 subunit family. As to quaternary structure, heterotrimeric transcription factor composed of three components, NF-YA, NF-YB and NF-YC. NF-YB and NF-YC must interact and dimerize for NF-YA association and DNA binding. Binds directly with DPB3-1. As to expression, ubiquitous. Predominantly expressed in leaves, flowers and siliques.

The protein resides in the nucleus. Its function is as follows. Component of the NF-Y/HAP transcription factor complex. The NF-Y complex stimulates the transcription of various genes by recognizing and binding to a CCAAT motif in promoters. The protein is Nuclear transcription factor Y subunit B-1 of Arabidopsis thaliana (Mouse-ear cress).